Consider the following 179-residue polypeptide: ATP synthase subunit delta (179 aa).

Belongs to the ATPase delta chain family. In terms of assembly, F-type ATPases have 2 components, F(1) - the catalytic core - and F(0) - the membrane proton channel. F(1) has five subunits: alpha(3), beta(3), gamma(1), delta(1), epsilon(1). F(0) has three main subunits: a(1), b(2) and c(10-14). The alpha and beta chains form an alternating ring which encloses part of the gamma chain. F(1) is attached to F(0) by a central stalk formed by the gamma and epsilon chains, while a peripheral stalk is formed by the delta and b chains.

The protein localises to the cell membrane. In terms of biological role, f(1)F(0) ATP synthase produces ATP from ADP in the presence of a proton or sodium gradient. F-type ATPases consist of two structural domains, F(1) containing the extramembraneous catalytic core and F(0) containing the membrane proton channel, linked together by a central stalk and a peripheral stalk. During catalysis, ATP synthesis in the catalytic domain of F(1) is coupled via a rotary mechanism of the central stalk subunits to proton translocation. This protein is part of the stalk that links CF(0) to CF(1). It either transmits conformational changes from CF(0) to CF(1) or is implicated in proton conduction. The protein is ATP synthase subunit delta of Natranaerobius thermophilus (strain ATCC BAA-1301 / DSM 18059 / JW/NM-WN-LF).